Here is a 238-residue protein sequence, read N- to C-terminus: Probable transcriptional regulatory protein YcdB (238 aa).

The protein belongs to the TACO1 family. YeeN subfamily.

The protein localises to the cytoplasm. The polypeptide is Probable transcriptional regulatory protein YcdB (ycdB) (Lactococcus lactis subsp. lactis (strain IL1403) (Streptococcus lactis)).